The primary structure comprises 432 residues: MTTTIRQFTSSSSIKGSSGLGGGSSRTSCRLSGGLGAGSCRLGSAGGLGSTLGGSSYSSCYSFGSGGGYGSSFGGVDGLLAGGEKATMQNLNDRLASYLDKVRALEEANTELEVKIRDWYQRQAPGPARDYSQYYRTIEELQNKILTATVDNANILLQIDNARLAADDFRTKFETEQALRLSVEADINGLRRVLDELTLARADLEMQIENLKEELAYLKKNHEEEMNALRGQVGGEINVEMDAAPGVDLSRILNEMRDQYEKMAEKNRKDAEDWFFSKTEELNREVATNSELVQSGESEISELRRTMQALEIELQSQLSMKASLEGNLAETENRYCVQLSQIQGLIGSVEEQLAQLRCEMEQQNQEYKILLDVKTRLEQEIATYRRLLEGEDAHLTQYKKEPVTTRQVRTIVEEVQDGKVISSREQVHQTTR.

Residues 1 to 24 (MTTTIRQFTSSSSIKGSSGLGGGS) form a disordered region. A head region spans residues 1-83 (MTTTIRQFTS…GGVDGLLAGG (83 aa)). 2 positions are modified to phosphoserine: serine 12 and serine 13. Lysine 15 participates in a covalent cross-link: Glycyl lysine isopeptide (Lys-Gly) (interchain with G-Cter in SUMO1); alternate. Lysine 15 is covalently cross-linked (Glycyl lysine isopeptide (Lys-Gly) (interchain with G-Cter in SUMO2); alternate). Phosphoserine occurs at positions 25, 32, and 39. A Phosphoserine; by RPS6KA1 modification is found at serine 44. The coil 1A stretch occupies residues 84–120 (EKATMQNLNDRLASYLDKVRALEEANTELEVKIRDWY). An IF rod domain is found at 84–395 (EKATMQNLND…RLLEGEDAHL (312 aa)). A Phosphothreonine modification is found at threonine 110. The linker 1 stretch occupies residues 121-138 (QRQAPGPARDYSQYYRTI). The coil 1B stretch occupies residues 139 to 230 (EELQNKILTA…NHEEEMNALR (92 aa)). Residues 231–250 (GQVGGEINVEMDAAPGVDLS) form a linker 12 region. Positions 251–392 (RILNEMRDQY…TYRRLLEGED (142 aa)) are coil 2. Residue lysine 278 forms a Glycyl lysine isopeptide (Lys-Gly) (interchain with G-Cter in SUMO2) linkage. Position 279 is a phosphothreonine (threonine 279). Position 323 is a phosphoserine (serine 323). The tail stretch occupies residues 393–432 (AHLTQYKKEPVTTRQVRTIVEEVQDGKVISSREQVHQTTR). Glycyl lysine isopeptide (Lys-Gly) (interchain with G-Cter in SUMO1); alternate cross-links involve residues lysine 399, lysine 400, and lysine 419. Residues lysine 399, lysine 400, and lysine 419 each participate in a glycyl lysine isopeptide (Lys-Gly) (interchain with G-Cter in SUMO2); alternate cross-link.

It belongs to the intermediate filament family. Heterodimer of a type I and a type II keratin. KRT17 associates with KRT6 isomers (KRT6A or KRT6B). Interacts with TRADD and SFN. In terms of processing, phosphorylation at Ser-44 occurs in a growth- and stress-dependent fashion in skin keratinocytes, it has no effect on filament organization.

The protein localises to the cytoplasm. Its function is as follows. Type I keratin involved in the formation and maintenance of various skin appendages, specifically in determining shape and orientation of hair. Required for the correct growth of hair follicles, in particular for the persistence of the anagen (growth) state. Modulates the function of TNF-alpha in the specific context of hair cycling. Regulates protein synthesis and epithelial cell growth through binding to the adapter protein SFN and by stimulating Akt/mTOR pathway. Involved in tissue repair. May be a marker of basal cell differentiation in complex epithelia and therefore indicative of a certain type of epithelial 'stem cells'. Acts as a promoter of epithelial proliferation by acting a regulator of immune response in skin: promotes Th1/Th17-dominated immune environment contributing to the development of basaloid skin tumors. May act as an autoantigen in the immunopathogenesis of psoriasis, with certain peptide regions being a major target for autoreactive T-cells and hence causing their proliferation. The chain is Keratin, type I cytoskeletal 17 from Pan troglodytes (Chimpanzee).